Consider the following 139-residue polypeptide: S-adenosyl-L-methionine-binding protein AF_0241 (139 aa).

Positions leucine 3–glutamine 133 constitute a TsaA-like domain. S-adenosyl-L-methionine is bound by residues glutamine 16, proline 20–glutamine 22, aspartate 58–lysine 59, arginine 82, leucine 92, and leucine 113–serine 116.

The protein belongs to the tRNA methyltransferase O family. As to quaternary structure, homodimer.

The chain is S-adenosyl-L-methionine-binding protein AF_0241 from Archaeoglobus fulgidus (strain ATCC 49558 / DSM 4304 / JCM 9628 / NBRC 100126 / VC-16).